A 194-amino-acid chain; its full sequence is Crossover junction endodeoxyribonuclease RuvC (194 aa).

Catalysis depends on residues Asp8, Glu72, and Asp144. Residues Asp8, Glu72, and Asp144 each contribute to the Mg(2+) site.

This sequence belongs to the RuvC family. Homodimer which binds Holliday junction (HJ) DNA. The HJ becomes 2-fold symmetrical on binding to RuvC with unstacked arms; it has a different conformation from HJ DNA in complex with RuvA. In the full resolvosome a probable DNA-RuvA(4)-RuvB(12)-RuvC(2) complex forms which resolves the HJ. Requires Mg(2+) as cofactor.

Its subcellular location is the cytoplasm. It catalyses the reaction Endonucleolytic cleavage at a junction such as a reciprocal single-stranded crossover between two homologous DNA duplexes (Holliday junction).. Functionally, the RuvA-RuvB-RuvC complex processes Holliday junction (HJ) DNA during genetic recombination and DNA repair. Endonuclease that resolves HJ intermediates. Cleaves cruciform DNA by making single-stranded nicks across the HJ at symmetrical positions within the homologous arms, yielding a 5'-phosphate and a 3'-hydroxyl group; requires a central core of homology in the junction. The consensus cleavage sequence is 5'-(A/T)TT(C/G)-3'. Cleavage occurs on the 3'-side of the TT dinucleotide at the point of strand exchange. HJ branch migration catalyzed by RuvA-RuvB allows RuvC to scan DNA until it finds its consensus sequence, where it cleaves and resolves the cruciform DNA. This chain is Crossover junction endodeoxyribonuclease RuvC, found in Psychrobacter cryohalolentis (strain ATCC BAA-1226 / DSM 17306 / VKM B-2378 / K5).